Consider the following 249-residue polypeptide: Diaminopimelate epimerase (249 aa).

The substrate site is built by asparagine 11 and asparagine 60. The active-site Proton donor is cysteine 69. Residues 70 to 71, asparagine 164, and 182 to 183 each bind substrate; these read GN and ER. Cysteine 192 serves as the catalytic Proton acceptor. 193–194 contributes to the substrate binding site; that stretch reads GT.

It belongs to the diaminopimelate epimerase family. As to quaternary structure, homodimer.

It localises to the cytoplasm. It catalyses the reaction (2S,6S)-2,6-diaminopimelate = meso-2,6-diaminopimelate. It functions in the pathway amino-acid biosynthesis; L-lysine biosynthesis via DAP pathway; DL-2,6-diaminopimelate from LL-2,6-diaminopimelate: step 1/1. In terms of biological role, catalyzes the stereoinversion of LL-2,6-diaminopimelate (L,L-DAP) to meso-diaminopimelate (meso-DAP), a precursor of L-lysine and an essential component of the bacterial peptidoglycan. This Campylobacter lari (strain RM2100 / D67 / ATCC BAA-1060) protein is Diaminopimelate epimerase.